The chain runs to 676 residues: Ribonuclease R (676 aa).

The region spanning 207 to 527 is the RNB domain; the sequence is RKDLRDLLCF…LIVHRLLFNP (321 aa). The 86-residue stretch at 566 to 651 folds into the S1 motif domain; sequence NKFLQEQPKT…LTQKIVWSIA (86 aa). The disordered stretch occupies residues 656–676; it reads DKPKKIKKTPSKKKGTKKRAS. A compositionally biased stretch (basic residues) spans 659-676; it reads KKIKKTPSKKKGTKKRAS.

This sequence belongs to the RNR ribonuclease family. RNase R subfamily.

The protein localises to the cytoplasm. It carries out the reaction Exonucleolytic cleavage in the 3'- to 5'-direction to yield nucleoside 5'-phosphates.. Functionally, 3'-5' exoribonuclease that releases 5'-nucleoside monophosphates and is involved in maturation of structured RNAs. This is Ribonuclease R from Chlamydia pneumoniae (Chlamydophila pneumoniae).